The chain runs to 310 residues: Ornithine carbamoyltransferase (310 aa).

Carbamoyl phosphate-binding positions include 58–61, glutamine 85, arginine 109, and 136–139; these read STRT and HPCQ. L-ornithine-binding positions include asparagine 167, aspartate 227, and 231–232; that span reads SM. Residues 266 to 267 and arginine 294 each bind carbamoyl phosphate; that span reads CL.

It belongs to the aspartate/ornithine carbamoyltransferase superfamily. OTCase family.

The protein resides in the cytoplasm. It carries out the reaction carbamoyl phosphate + L-ornithine = L-citrulline + phosphate + H(+). The protein operates within amino-acid biosynthesis; L-arginine biosynthesis; L-arginine from L-ornithine and carbamoyl phosphate: step 1/3. Its function is as follows. Reversibly catalyzes the transfer of the carbamoyl group from carbamoyl phosphate (CP) to the N(epsilon) atom of ornithine (ORN) to produce L-citrulline. This Rhodopseudomonas palustris (strain ATCC BAA-98 / CGA009) protein is Ornithine carbamoyltransferase.